Reading from the N-terminus, the 128-residue chain is Transcription antitermination protein NusB (128 aa).

This sequence belongs to the NusB family.

In terms of biological role, involved in transcription antitermination. Required for transcription of ribosomal RNA (rRNA) genes. Binds specifically to the boxA antiterminator sequence of the ribosomal RNA (rrn) operons. The protein is Transcription antitermination protein NusB of Listeria welshimeri serovar 6b (strain ATCC 35897 / DSM 20650 / CCUG 15529 / CIP 8149 / NCTC 11857 / SLCC 5334 / V8).